The primary structure comprises 117 residues: Big defensin (117 aa).

An N-terminal signal peptide occupies residues 1–23 (MEKKTAYCLLFLVLLVPYTALGA). Residues 24-33 (VLKRAPAKKE) constitute a propeptide that is removed on maturation. Cystine bridges form between Cys82–Cys112, Cys89–Cys107, and Cys93–Cys113.

The protein belongs to the big defensin family.

It is found in the secreted. Functionally, significantly inhibits the growth of Gram-negative and Gram-positive bacteria and fungi in vitro. This chain is Big defensin, found in Branchiostoma belcheri (Amphioxus).